The following is a 649-amino-acid chain: UvrABC system protein B (649 aa).

The Helicase ATP-binding domain occupies 25–178 (EHYKDGIKEQ…EDILKELVKM (154 aa)). ATP is bound at residue 38 to 45 (GVTGSGKT). The Beta-hairpin signature appears at 91–114 (YYDYYQPEAYVAQTDTFIDKESAI). Residues 428–594 (QVDDLLGEIR…SVVRKLKDKK (167 aa)) enclose the Helicase C-terminal domain. The UVR domain maps to 614–649 (DEIIKELEKEMKQAAKDLNFEKAAKLRDRIMELKEE).

The protein belongs to the UvrB family. In terms of assembly, forms a heterotetramer with UvrA during the search for lesions. Interacts with UvrC in an incision complex.

It is found in the cytoplasm. Functionally, the UvrABC repair system catalyzes the recognition and processing of DNA lesions. A damage recognition complex composed of 2 UvrA and 2 UvrB subunits scans DNA for abnormalities. Upon binding of the UvrA(2)B(2) complex to a putative damaged site, the DNA wraps around one UvrB monomer. DNA wrap is dependent on ATP binding by UvrB and probably causes local melting of the DNA helix, facilitating insertion of UvrB beta-hairpin between the DNA strands. Then UvrB probes one DNA strand for the presence of a lesion. If a lesion is found the UvrA subunits dissociate and the UvrB-DNA preincision complex is formed. This complex is subsequently bound by UvrC and the second UvrB is released. If no lesion is found, the DNA wraps around the other UvrB subunit that will check the other stand for damage. The polypeptide is UvrABC system protein B (Methanosphaera stadtmanae (strain ATCC 43021 / DSM 3091 / JCM 11832 / MCB-3)).